The primary structure comprises 417 residues: Serine hydroxymethyltransferase (417 aa).

Residues Leu-121 and 125–127 (GHL) contribute to the (6S)-5,6,7,8-tetrahydrofolate site. Position 229 is an N6-(pyridoxal phosphate)lysine (Lys-229). 355–357 (SPF) is a (6S)-5,6,7,8-tetrahydrofolate binding site.

This sequence belongs to the SHMT family. Homodimer. Requires pyridoxal 5'-phosphate as cofactor.

The protein localises to the cytoplasm. The catalysed reaction is (6R)-5,10-methylene-5,6,7,8-tetrahydrofolate + glycine + H2O = (6S)-5,6,7,8-tetrahydrofolate + L-serine. It participates in one-carbon metabolism; tetrahydrofolate interconversion. Its pathway is amino-acid biosynthesis; glycine biosynthesis; glycine from L-serine: step 1/1. Functionally, catalyzes the reversible interconversion of serine and glycine with tetrahydrofolate (THF) serving as the one-carbon carrier. This reaction serves as the major source of one-carbon groups required for the biosynthesis of purines, thymidylate, methionine, and other important biomolecules. Also exhibits THF-independent aldolase activity toward beta-hydroxyamino acids, producing glycine and aldehydes, via a retro-aldol mechanism. In Xanthomonas oryzae pv. oryzae (strain MAFF 311018), this protein is Serine hydroxymethyltransferase.